Here is a 130-residue protein sequence, read N- to C-terminus: Small ribosomal subunit protein uS8 (130 aa).

The protein belongs to the universal ribosomal protein uS8 family. In terms of assembly, part of the 30S ribosomal subunit. Contacts proteins S5 and S12.

One of the primary rRNA binding proteins, it binds directly to 16S rRNA central domain where it helps coordinate assembly of the platform of the 30S subunit. The chain is Small ribosomal subunit protein uS8 from Alteromonas mediterranea (strain DSM 17117 / CIP 110805 / LMG 28347 / Deep ecotype).